An 883-amino-acid polypeptide reads, in one-letter code: Glutamate receptor 2 (883 aa).

The N-terminal stretch at 1–24 (MQKIMHISVLLSPVLWGLIFGVSS) is a signal peptide. Residues 25–543 (NSIQIGGLFP…GVFSFLDPLA (519 aa)) are Extracellular-facing. Cysteines 78 and 330 form a disulfide. N256, N370, N406, and N413 each carry an N-linked (GlcNAc...) asparagine glycan. 3 residues coordinate L-glutamate: P499, T501, and R506. The chain crosses the membrane as a helical span at residues 544 to 564 (YEIWMCIVFAYIGVSVVLFLV). Residues 565 to 591 (SRFSPYEWHTEEFEDGRETQSSESTNE) lie on the Cytoplasmic side of the membrane. The segment at residues 592-607 (FGIFNSLWFSLGAFMQ) is an intramembrane region (helical; Pore-forming). The stretch at 608-610 (QGC) is an intramembrane region. A lipid anchor (S-palmitoyl cysteine) is attached at C610. At 611–616 (DISPRS) the chain is on the cytoplasmic side. A helical transmembrane segment spans residues 617–637 (LSGRIVGGVWWFFTLIIISSY). The Extracellular portion of the chain corresponds to 638–812 (TANLAAFLTV…EKTSALSLSN (175 aa)). L-glutamate is bound by residues S675 and T676. S683 bears the Phosphoserine; by PKC mark. S717 is subject to Phosphoserine; by PKG. E726 contributes to the L-glutamate binding site. The cysteines at positions 739 and 794 are disulfide-linked. Residues 813 to 833 (VAGVFYILVGGLGLAMLVALI) traverse the membrane as a helical segment. Residues 834 to 883 (EFCYKSRAEAKRMKVAKNAQNINPSSSQNSQNFATYKEGYNVYGIESVKI) lie on the Cytoplasmic side of the membrane. Residue C836 is the site of S-palmitoyl cysteine attachment. Phosphoserine occurs at positions 860 and 863. The segment at 867-877 (ATYKEGYNVYG) is required for interaction with IQSEC1. A Phosphotyrosine modification is found at Y876. At S880 the chain carries Phosphoserine.

The protein belongs to the glutamate-gated ion channel (TC 1.A.10.1) family. GRIA2 subfamily. Homotetramer or heterotetramer of pore-forming glutamate receptor subunits. Tetramers may be formed by the dimerization of dimers. May interact with MPP4. Forms a ternary complex with GRIP1 and CSPG4. Interacts with ATAD1 in an ATP-dependent manner. ATAD1-catalyzed ATP hydrolysis disrupts binding to ATAD1 and to GRIP1 and leads to AMPAR complex disassembly. Interacts with GRIP1 and GRIP2. Interacts with NSF via its C-terminus. Isoform 1, but not isoform 3, interacts with PICK1. Interacts with CACNG2. Interacts with GRIA1 and SYNDIG1. Part of a complex containing GRIA2, NSF and NAPA and/or NAPB. Interacts with SNX27 (via PDZ domain); the interaction is required for recycling to the plasma membrane when endocytosed and prevent degradation in lysosomes. Interacts with LRFN1. Found in a complex with GRIA1, GRIA3, GRIA4, CNIH2, CNIH3, CACNG2, CACNG3, CACNG4, CACNG5, CACNG7 and CACNG8. Interacts with CACNG5. Interacts with OLFM2. Interacts with AP4B1, AP4E1 and AP4M1; probably indirect it mediates the somatodendritic localization of GRIA2 in neurons. Forms a complex with GRIP1, NSG1 and STX12; controls the intracellular fate of AMPAR and the endosomal sorting of the GRIA2 subunit toward recycling and membrane targeting. Interacts with IQSEC1; the interaction is required for ARF6 activation. Interacts (heterotetramer form) with CNIH2 and CNIH3; this interaction promotes expression at the plasma membrane and extensively modulates their gating properties by slowing deactivation and desensitization kinetics. Palmitoylated. Depalmitoylated upon L-glutamate stimulation. Cys-610 palmitoylation leads to Golgi retention and decreased cell surface expression. In contrast, Cys-836 palmitoylation does not affect cell surface expression but regulates stimulation-dependent endocytosis. In terms of processing, ubiquitinated by RNF167, leading to its degradation. Post-translationally, phosphorylation at Tyr-876 is required for interaction with IQSEC1 and ARF6 activation, which in turn triggers AMPAR internalization for persistent synaptic depression. N-glycosylated.

Its subcellular location is the cell membrane. The protein resides in the postsynaptic cell membrane. The protein localises to the postsynaptic density membrane. It carries out the reaction Ca(2+)(in) = Ca(2+)(out). The enzyme catalyses Na(+)(in) = Na(+)(out). Ionotropic glutamate receptor that functions as a ligand-gated cation channel, gated by L-glutamate and glutamatergic agonists such as alpha-amino-3-hydroxy-5-methyl-4-isoxazolepropionic acid (AMPA), quisqualic acid, and kainic acid. L-glutamate acts as an excitatory neurotransmitter at many synapses in the central nervous system and plays an important role in fast excitatory synaptic transmission. Binding of the excitatory neurotransmitter L-glutamate induces a conformation change, leading to the opening of the cation channel, and thereby converts the chemical signal to an electrical impulse upon entry of monovalent and divalent cations such as sodium and calcium. The receptor then desensitizes rapidly and enters in a transient inactive state, characterized by the presence of bound agonist. In the presence of CACNG4 or CACNG7 or CACNG8, shows resensitization which is characterized by a delayed accumulation of current flux upon continued application of L-glutamate. Through complex formation with NSG1, GRIP1 and STX12 controls the intracellular fate of AMPAR and the endosomal sorting of the GRIA2 subunit toward recycling and membrane targeting. The protein is Glutamate receptor 2 of Homo sapiens (Human).